Consider the following 332-residue polypeptide: T-cell surface glycoprotein CD1c3 (332 aa).

An N-terminal signal peptide occupies residues 1 to 17 (MLFLQFLFLDVVLGGSI). Topologically, residues 18 to 300 (TKNVVQENIS…IILYWGHGLS (283 aa)) are extracellular. Residues Asn25, Asn38, Asn75, and Asn146 are each glycosylated (N-linked (GlcNAc...) asparagine). 2 cysteine pairs are disulfide-bonded: Cys120-Cys184 and Cys224-Cys279. Positions 205-292 (PEVWLSSSPN…HSSLRDQDII (88 aa)) constitute an Ig-like domain. The helical transmembrane segment at 301-321 (VILITFAVIVPLVLLIILVLL) threads the bilayer. Over 322-332 (CKKCCTYQGIP) the chain is Cytoplasmic.

Heterodimer with B2M (beta-2-microglobulin).

The protein resides in the cell membrane. The protein localises to the endosome membrane. Functionally, antigen-presenting protein that binds self and non-self lipid and glycolipid antigens and presents them to T-cell receptors on natural killer T-cells. This Cavia porcellus (Guinea pig) protein is T-cell surface glycoprotein CD1c3 (CD1C3).